An 88-amino-acid chain; its full sequence is Apolipoprotein C-I (88 aa).

Positions 1–26 (MRLILSLPVLAVVLAMVLEGPAPAQA) are cleaved as a signal peptide.

Belongs to the apolipoprotein C1 family.

Its subcellular location is the secreted. Functionally, inhibitor of lipoprotein binding to the low density lipoprotein (LDL) receptor, LDL receptor-related protein, and very low density lipoprotein (VLDL) receptor. Associates with high density lipoproteins (HDL) and the triacylglycerol-rich lipoproteins in the plasma and makes up about 10% of the protein of the VLDL and 2% of that of HDL. Appears to interfere directly with fatty acid uptake and is also the major plasma inhibitor of cholesteryl ester transfer protein (CETP). Binds free fatty acids and reduces their intracellular esterification. Modulates the interaction of APOE with beta-migrating VLDL and inhibits binding of beta-VLDL to the LDL receptor-related protein. This is Apolipoprotein C-I (APOC1) from Cynopterus brachyotis (Lesser short-nosed fruit bat).